Consider the following 398-residue polypeptide: Enoyl-[acyl-carrier-protein] reductase [NADH] (398 aa).

NAD(+)-binding positions include 48-53, 74-75, 111-112, and 139-140; these read GASTGY, FE, DA, and LA. Tyr-225 is a substrate binding site. Residue Tyr-235 is the Proton donor of the active site. NAD(+) is bound by residues Lys-244 and 273 to 275; that span reads VVT.

This sequence belongs to the TER reductase family. Monomer.

The enzyme catalyses a 2,3-saturated acyl-[ACP] + NAD(+) = a (2E)-enoyl-[ACP] + NADH + H(+). Its pathway is lipid metabolism; fatty acid biosynthesis. Functionally, involved in the final reduction of the elongation cycle of fatty acid synthesis (FAS II). Catalyzes the reduction of a carbon-carbon double bond in an enoyl moiety that is covalently linked to an acyl carrier protein (ACP). The polypeptide is Enoyl-[acyl-carrier-protein] reductase [NADH] (Pseudomonas fluorescens (strain ATCC BAA-477 / NRRL B-23932 / Pf-5)).